Consider the following 248-residue polypeptide: UPF0246 protein lp_0089 (248 aa).

This sequence belongs to the UPF0246 family.

This Lactiplantibacillus plantarum (strain ATCC BAA-793 / NCIMB 8826 / WCFS1) (Lactobacillus plantarum) protein is UPF0246 protein lp_0089.